The following is a 440-amino-acid chain: Xaa-Pro dipeptidase (440 aa).

Aspartate 244, aspartate 255, histidine 335, glutamate 380, and glutamate 419 together coordinate Mn(2+).

This sequence belongs to the peptidase M24B family. Bacterial-type prolidase subfamily. Requires Mn(2+) as cofactor.

It carries out the reaction Xaa-L-Pro dipeptide + H2O = an L-alpha-amino acid + L-proline. Functionally, splits dipeptides with a prolyl residue in the C-terminal position. The polypeptide is Xaa-Pro dipeptidase (Shewanella baltica (strain OS195)).